The sequence spans 199 residues: Probable thymidylate kinase (199 aa).

ATP is bound at residue 9 to 16 (GIDGCGKT).

It belongs to the thymidylate kinase family.

It carries out the reaction dTMP + ATP = dTDP + ADP. In Methanococcus maripaludis (strain C7 / ATCC BAA-1331), this protein is Probable thymidylate kinase.